Consider the following 184-residue polypeptide: Ribosome maturation factor RimP (184 aa).

The protein belongs to the RimP family.

It localises to the cytoplasm. Functionally, required for maturation of 30S ribosomal subunits. The chain is Ribosome maturation factor RimP from Zymomonas mobilis subsp. mobilis (strain ATCC 31821 / ZM4 / CP4).